Reading from the N-terminus, the 600-residue chain is Adenine deaminase 4 (600 aa).

This sequence belongs to the metallo-dependent hydrolases superfamily. Adenine deaminase family. Mn(2+) is required as a cofactor.

The catalysed reaction is adenine + H2O + H(+) = hypoxanthine + NH4(+). In Rhizobium meliloti (strain 1021) (Ensifer meliloti), this protein is Adenine deaminase 4.